The following is a 258-amino-acid chain: MAVISMKQLLEAGVHFGHQTRRWNPKMAKYIFTERNGIHVIDLQQTVKLADQAYEFIRDAAANDAVILFVGTKKQAAEAVKDEAIRAGQYFINHRWLGGTLTNWGTIQKRIARLKEINRMEEDGTFEVLPKKEVALLNKQRARLEKFLGGIADMPRIPDVMFVVDPHKEQIAVKEAKKLGIPVVAMVDTNTDPDDIDVIIPANDDAIRAVKLITAKMADAIIEGNQGEDSVAAVEAELAAEPASTESIEELVEVVEGK.

The protein belongs to the universal ribosomal protein uS2 family.

In Streptococcus suis (strain 98HAH33), this protein is Small ribosomal subunit protein uS2.